Here is a 412-residue protein sequence, read N- to C-terminus: MSRSPSLPERPHLDLDPEMSDAERLSALRQHFERMVDVNRELDQRLQNADDRHAELVDEVDQMKARNEALKTASYYIATVEELTDDGVIIKQHGNNQEVLTEFAPSLNIDDIEPGDRVAINDSFAVQTVLDDETDARAQAMEVVESPTVTYDDIGGIDEQVREVREAVEQPLENPEMFAEVGIDPPSGVLLYGPPGTGKTMLAKAVANETNASFIKMAGSELVQKFIGEGARLVRDLFKLAAEREPVVVFIDEIDAVASKRTDSKTSGDAEVQRTMMQLLSEMDGFDDRGDIRIIAATNRFDMLDEAILRPGRFDRLIEVPKPAVEGRRHILDIHTRDMNVADDVDLDALAEELDDYSGADIASLTTEAGMFAIRDGRTEVTGADFDAAHEKLSNVDESGTGPISGFTDYQY.

Positions 28-74 (LRQHFERMVDVNRELDQRLQNADDRHAELVDEVDQMKARNEALKTAS) form a coiled coil. ATP is bound by residues 196-201 (GTGKTM) and His-335. Residues 409–412 (DYQY) form a docks into pockets in the proteasome alpha-ring to cause gate opening region.

The protein belongs to the AAA ATPase family. In terms of assembly, homohexamer. The hexameric complex has a two-ring architecture resembling a top hat that caps the 20S proteasome core at one or both ends. Upon ATP-binding, the C-terminus of PAN interacts with the alpha-rings of the proteasome core by binding to the intersubunit pockets.

The protein localises to the cytoplasm. In terms of biological role, ATPase which is responsible for recognizing, binding, unfolding and translocation of substrate proteins into the archaeal 20S proteasome core particle. Is essential for opening the gate of the 20S proteasome via an interaction with its C-terminus, thereby allowing substrate entry and access to the site of proteolysis. Thus, the C-termini of the proteasomal ATPase function like a 'key in a lock' to induce gate opening and therefore regulate proteolysis. Unfolding activity requires energy from ATP hydrolysis, whereas ATP binding alone promotes ATPase-20S proteasome association which triggers gate opening, and supports translocation of unfolded substrates. The polypeptide is Proteasome-activating nucleotidase 2 (Haloferax volcanii (strain ATCC 29605 / DSM 3757 / JCM 8879 / NBRC 14742 / NCIMB 2012 / VKM B-1768 / DS2) (Halobacterium volcanii)).